A 299-amino-acid polypeptide reads, in one-letter code: Nitrogenase iron protein (299 aa).

An ATP-binding site is contributed by 8–15 (GKGGIGKS). [4Fe-4S] cluster is bound at residue C96. Residue R99 is modified to ADP-ribosylarginine; by dinitrogenase reductase ADP-ribosyltransferase. Residue C130 coordinates [4Fe-4S] cluster.

It belongs to the NifH/BchL/ChlL family. Homodimer. [4Fe-4S] cluster is required as a cofactor. The reversible ADP-ribosylation of Arg-99 inactivates the nitrogenase reductase and regulates nitrogenase activity.

It catalyses the reaction N2 + 8 reduced [2Fe-2S]-[ferredoxin] + 16 ATP + 16 H2O = H2 + 8 oxidized [2Fe-2S]-[ferredoxin] + 2 NH4(+) + 16 ADP + 16 phosphate + 6 H(+). Functionally, the key enzymatic reactions in nitrogen fixation are catalyzed by the nitrogenase complex, which has 2 components: the iron protein and the molybdenum-iron protein. In Gloeothece citriformis (strain PCC 7424) (Cyanothece sp. (strain PCC 7424)), this protein is Nitrogenase iron protein.